A 332-amino-acid chain; its full sequence is MDSTSSLHGSSLHRPSTEQTRTDFSWDGINLSMEDTTSILPKLKRNSNAYGIGALAKSSFSGISRSMKDHVTKPTAMGQGRVAHMIEWQGWGKAPAIQPQHSHEAVRRDTDAYSDLSDGEKEARFLAGVMEQFAISEATLMAWSSMDGEDMSVNSTQEPLDCNYSDNYQELMESQDALAQAPMDGWPHSYVSQGMYCLGSSDAWEASDQSLIASPATGSYLGPAFDDSQPSLHDMGPSQPASGYSAQEPPPLLGVDTDWASEVGGVELARGPVEEEKRPLAPEEEEDAGCRDLESLSPREDPEMSTALSRKVSDVTSSGVQSFDEEEGDANN.

The disordered stretch occupies residues 1–22 (MDSTSSLHGSSLHRPSTEQTRT). A phosphoserine mark is found at serine 47, serine 114, and serine 117. Positions 221–332 (LGPAFDDSQP…FDEEEGDANN (112 aa)) are disordered. 2 stretches are compositionally biased toward basic and acidic residues: residues 272-281 (PVEEEKRPLA) and 288-302 (AGCR…REDP). 3 positions are modified to phosphoserine: serine 295, serine 297, and serine 313. At threonine 316 the chain carries Phosphothreonine. Serine 317, serine 318, and serine 322 each carry phosphoserine. Over residues 323–332 (FDEEEGDANN) the composition is skewed to acidic residues.

It belongs to the FAM131 family.

This is Protein FAM131B (Fam131b) from Rattus norvegicus (Rat).